Consider the following 389-residue polypeptide: Succinate--CoA ligase [ADP-forming] subunit beta (389 aa).

Residues 9-244 enclose the ATP-grasp domain; that stretch reads KEILRKFGVA…LDEEDPAEVE (236 aa). Residues Lys-46, 53–55, Glu-99, Ala-102, and Glu-107 each bind ATP; that span reads GRG. Mg(2+) is bound by residues Asn-199 and Asp-213. Substrate is bound by residues Asn-264 and 321 to 323; that span reads GIM.

The protein belongs to the succinate/malate CoA ligase beta subunit family. As to quaternary structure, heterotetramer of two alpha and two beta subunits. Mg(2+) is required as a cofactor.

The catalysed reaction is succinate + ATP + CoA = succinyl-CoA + ADP + phosphate. The enzyme catalyses GTP + succinate + CoA = succinyl-CoA + GDP + phosphate. Its pathway is carbohydrate metabolism; tricarboxylic acid cycle; succinate from succinyl-CoA (ligase route): step 1/1. Succinyl-CoA synthetase functions in the citric acid cycle (TCA), coupling the hydrolysis of succinyl-CoA to the synthesis of either ATP or GTP and thus represents the only step of substrate-level phosphorylation in the TCA. The beta subunit provides nucleotide specificity of the enzyme and binds the substrate succinate, while the binding sites for coenzyme A and phosphate are found in the alpha subunit. This is Succinate--CoA ligase [ADP-forming] subunit beta from Paraburkholderia xenovorans (strain LB400).